The primary structure comprises 1075 residues: Putative type I restriction enzyme MjaVIIP endonuclease subunit (1075 aa).

Belongs to the HsdR family. The type I restriction/modification system is composed of three polypeptides R, M and S.

The enzyme catalyses Endonucleolytic cleavage of DNA to give random double-stranded fragments with terminal 5'-phosphates, ATP is simultaneously hydrolyzed.. The restriction (R) subunit of a type I restriction enzyme that recognizes 5'-CAAN(7)TGG-3' and cleaves a random distance away. The R subunit is required for both endonuclease and ATPase activities but not for modification. After locating a non-methylated recognition site, the enzyme complex serves as a molecular motor that translocates DNA in an ATP-dependent manner until a collision occurs that triggers cleavage. The protein is Putative type I restriction enzyme MjaVIIP endonuclease subunit of Methanocaldococcus jannaschii (strain ATCC 43067 / DSM 2661 / JAL-1 / JCM 10045 / NBRC 100440) (Methanococcus jannaschii).